A 95-amino-acid chain; its full sequence is Small ribosomal subunit protein bS6 (95 aa).

The protein belongs to the bacterial ribosomal protein bS6 family.

In terms of biological role, binds together with bS18 to 16S ribosomal RNA. The chain is Small ribosomal subunit protein bS6 from Bacillus pumilus (strain SAFR-032).